A 208-amino-acid polypeptide reads, in one-letter code: Probable very-long-chain (3R)-3-hydroxyacyl-CoA dehydratase (208 aa).

At 1–11 (MSKILKIQYLK) the chain is on the cytoplasmic side. A helical membrane pass occupies residues 12-35 (LYNVISCFLWMSVLLRTGLIWGIT). At 36 to 46 (KDTAVVFHETN) the chain is on the lumenal side. Residues 47–67 (TLVRWVQTLAIAEVFHSIFGL) form a helical membrane-spanning segment. The Cytoplasmic segment spans residues 68–78 (VSSSPLTTIIQ). Residues 79–97 (VASRLYLVWGVCYPFSYVI) traverse the membrane as a helical segment. At 98 to 102 (EGSPI) the chain is on the lumenal side. The chain crosses the membrane as a helical span at residues 103–123 (YLSMIIAWSITEIIRYAFYAF). Residues 124 to 134 (NLNGDIPAFLT) are Cytoplasmic-facing. Residues 135 to 157 (WLRYNTFLILYPIGAGSEFLLVL) traverse the membrane as a helical segment. Catalysis depends on residues Tyr145 and Glu152. Residues 158-171 (KSRIAAQYVWSLNK) lie on the Lumenal side of the membrane. Residues 172–192 (LLWPILMSIYPPGLYIMYTHM) traverse the membrane as a helical segment. Residues 193–208 (LAQRRKISKRAAARRT) are Cytoplasmic-facing.

Belongs to the very long-chain fatty acids dehydratase HACD family.

It is found in the endoplasmic reticulum membrane. It carries out the reaction a very-long-chain (3R)-3-hydroxyacyl-CoA = a very-long-chain (2E)-enoyl-CoA + H2O. The protein operates within lipid metabolism; fatty acid biosynthesis. Its function is as follows. Catalyzes the third of the four reactions of the long-chain fatty acids elongation cycle. This endoplasmic reticulum-bound enzymatic process, allows the addition of two carbons to the chain of long- and very long-chain fatty acids/VLCFAs per cycle. This enzyme catalyzes the dehydration of the 3-hydroxyacyl-CoA intermediate into trans-2,3-enoyl-CoA, within each cycle of fatty acid elongation. Thereby, it participates in the production of VLCFAs of different chain lengths that are involved in multiple biological processes as precursors of membrane lipids and lipid mediators. The chain is Probable very-long-chain (3R)-3-hydroxyacyl-CoA dehydratase from Schizosaccharomyces pombe (strain 972 / ATCC 24843) (Fission yeast).